The sequence spans 141 residues: Hemoglobin subunit alpha (141 aa).

One can recognise a Globin domain in the interval 1-141 (VLSPADKTNV…VSTVLTSKYR (141 aa)). Position 3 is a phosphoserine (S3). An N6-succinyllysine modification is found at K7. Position 8 is a phosphothreonine (T8). At K11 the chain carries N6-succinyllysine. Position 16 is an N6-acetyllysine; alternate (K16). Position 16 is an N6-succinyllysine; alternate (K16). Y24 is subject to Phosphotyrosine. S35 is subject to Phosphoserine. At K40 the chain carries N6-succinyllysine. A Phosphoserine modification is found at S49. Residue H58 participates in O2 binding. Residue H87 coordinates heme b. Residue S102 is modified to Phosphoserine. Residue T108 is modified to Phosphothreonine. S124 and S131 each carry phosphoserine. T134 and T137 each carry phosphothreonine. A Phosphoserine modification is found at S138.

The protein belongs to the globin family. As to quaternary structure, heterotetramer of two alpha chains and two beta chains. As to expression, red blood cells.

Its function is as follows. Involved in oxygen transport from the lung to the various peripheral tissues. Functionally, hemopressin acts as an antagonist peptide of the cannabinoid receptor CNR1. Hemopressin-binding efficiently blocks cannabinoid receptor CNR1 and subsequent signaling. The chain is Hemoglobin subunit alpha (HBA) from Semnopithecus entellus (Northern plains gray langur).